We begin with the raw amino-acid sequence, 122 residues long: Large ribosomal subunit protein uL14 (122 aa).

The protein belongs to the universal ribosomal protein uL14 family. In terms of assembly, part of the 50S ribosomal subunit. Forms a cluster with proteins L3 and L19. In the 70S ribosome, L14 and L19 interact and together make contacts with the 16S rRNA in bridges B5 and B8.

Its function is as follows. Binds to 23S rRNA. Forms part of two intersubunit bridges in the 70S ribosome. The chain is Large ribosomal subunit protein uL14 from Sulfurihydrogenibium sp. (strain YO3AOP1).